The primary structure comprises 183 residues: Alkyl hydroperoxide reductase AhpD (183 aa).

Catalysis depends on Cys132, which acts as the Proton donor. Cysteines 132 and 135 form a disulfide. Cys135 acts as the Cysteine sulfenic acid (-SOH) intermediate in catalysis.

The protein belongs to the AhpD family.

The catalysed reaction is N(6)-[(R)-dihydrolipoyl]-L-lysyl-[lipoyl-carrier protein] + a hydroperoxide = N(6)-[(R)-lipoyl]-L-lysyl-[lipoyl-carrier protein] + an alcohol + H2O. Its function is as follows. Antioxidant protein with alkyl hydroperoxidase activity. Required for the reduction of the AhpC active site cysteine residues and for the regeneration of the AhpC enzyme activity. This is Alkyl hydroperoxide reductase AhpD from Acidobacterium capsulatum (strain ATCC 51196 / DSM 11244 / BCRC 80197 / JCM 7670 / NBRC 15755 / NCIMB 13165 / 161).